The primary structure comprises 412 residues: Multidrug resistance protein MdtG (412 aa).

11 helical membrane passes run 19 to 39, 56 to 76, 90 to 110, 113 to 133, 144 to 164, 171 to 191, 222 to 242, 254 to 274, 288 to 308, 317 to 337, and 376 to 396; these read LGCFLTGAAFSLVMPFLPLYV, LVFSITFLFSAIASPFWGGLA, LGMSVVMMLMGMAQNIWQFLL, ALLGLLGGFIPNANALIATQI, TLSTGAVSGALLGPLAGGFLA, TVFFMTAAVLFICFLFTLFLI, LFVTSLIIQVATGSIAPILTL, IAFISGMIASVPGIAALMSAP, ILIVALIISVLLLIPMSFVQT, FLLGAADGALLPAVQTLLVYN, and AVFLVTAGVVLFNAIYSTLSL.

This sequence belongs to the major facilitator superfamily. DHA1 family. MdtG (TC 2.A.1.2.20) subfamily.

It is found in the cell inner membrane. This chain is Multidrug resistance protein MdtG, found in Klebsiella pneumoniae (strain 342).